The chain runs to 376 residues: N-acetyldiaminopimelate deacetylase (376 aa).

Asp-69 is an active-site residue. Catalysis depends on Glu-128, which acts as the Proton acceptor.

Belongs to the peptidase M20A family. N-acetyldiaminopimelate deacetylase subfamily.

The catalysed reaction is N-acetyl-(2S,6S)-2,6-diaminopimelate + H2O = (2S,6S)-2,6-diaminopimelate + acetate. It functions in the pathway amino-acid biosynthesis; L-lysine biosynthesis via DAP pathway; LL-2,6-diaminopimelate from (S)-tetrahydrodipicolinate (acetylase route): step 3/3. In terms of biological role, catalyzes the conversion of N-acetyl-diaminopimelate to diaminopimelate and acetate. The protein is N-acetyldiaminopimelate deacetylase of Streptococcus pneumoniae (strain Hungary19A-6).